Consider the following 495-residue polypeptide: Aspartyl/glutamyl-tRNA(Asn/Gln) amidotransferase subunit B (495 aa).

Belongs to the GatB/GatE family. GatB subfamily. Heterotrimer of A, B and C subunits.

It carries out the reaction L-glutamyl-tRNA(Gln) + L-glutamine + ATP + H2O = L-glutaminyl-tRNA(Gln) + L-glutamate + ADP + phosphate + H(+). The catalysed reaction is L-aspartyl-tRNA(Asn) + L-glutamine + ATP + H2O = L-asparaginyl-tRNA(Asn) + L-glutamate + ADP + phosphate + 2 H(+). Allows the formation of correctly charged Asn-tRNA(Asn) or Gln-tRNA(Gln) through the transamidation of misacylated Asp-tRNA(Asn) or Glu-tRNA(Gln) in organisms which lack either or both of asparaginyl-tRNA or glutaminyl-tRNA synthetases. The reaction takes place in the presence of glutamine and ATP through an activated phospho-Asp-tRNA(Asn) or phospho-Glu-tRNA(Gln). This Methanosarcina mazei (strain ATCC BAA-159 / DSM 3647 / Goe1 / Go1 / JCM 11833 / OCM 88) (Methanosarcina frisia) protein is Aspartyl/glutamyl-tRNA(Asn/Gln) amidotransferase subunit B.